The primary structure comprises 310 residues: Phosphoribosylaminoimidazole-succinocarboxamide synthase (310 aa).

This sequence belongs to the SAICAR synthetase family.

It catalyses the reaction 5-amino-1-(5-phospho-D-ribosyl)imidazole-4-carboxylate + L-aspartate + ATP = (2S)-2-[5-amino-1-(5-phospho-beta-D-ribosyl)imidazole-4-carboxamido]succinate + ADP + phosphate + 2 H(+). It participates in purine metabolism; IMP biosynthesis via de novo pathway; 5-amino-1-(5-phospho-D-ribosyl)imidazole-4-carboxamide from 5-amino-1-(5-phospho-D-ribosyl)imidazole-4-carboxylate: step 1/2. This is Phosphoribosylaminoimidazole-succinocarboxamide synthase from Dechloromonas aromatica (strain RCB).